The sequence spans 208 residues: Imidazole glycerol phosphate synthase subunit HisH (208 aa).

The Glutamine amidotransferase type-1 domain maps to 1–206 (MIVIIDYDTG…KEVTYSCKSS (206 aa)). The active-site Nucleophile is Cys-79. Residues His-181 and Glu-183 contribute to the active site.

As to quaternary structure, heterodimer of HisH and HisF.

The protein resides in the cytoplasm. It catalyses the reaction 5-[(5-phospho-1-deoxy-D-ribulos-1-ylimino)methylamino]-1-(5-phospho-beta-D-ribosyl)imidazole-4-carboxamide + L-glutamine = D-erythro-1-(imidazol-4-yl)glycerol 3-phosphate + 5-amino-1-(5-phospho-beta-D-ribosyl)imidazole-4-carboxamide + L-glutamate + H(+). It carries out the reaction L-glutamine + H2O = L-glutamate + NH4(+). It functions in the pathway amino-acid biosynthesis; L-histidine biosynthesis; L-histidine from 5-phospho-alpha-D-ribose 1-diphosphate: step 5/9. Its function is as follows. IGPS catalyzes the conversion of PRFAR and glutamine to IGP, AICAR and glutamate. The HisH subunit catalyzes the hydrolysis of glutamine to glutamate and ammonia as part of the synthesis of IGP and AICAR. The resulting ammonia molecule is channeled to the active site of HisF. The protein is Imidazole glycerol phosphate synthase subunit HisH of Listeria monocytogenes serovar 1/2a (strain ATCC BAA-679 / EGD-e).